Reading from the N-terminus, the 508-residue chain is UTP--glucose-1-phosphate uridylyltransferase (508 aa).

Ser13 carries the post-translational modification Phosphoserine. UTP-binding positions include 113–116, Lys127, Gln190, and Gly222; that span reads LNGG. 115-116 provides a ligand contact to substrate; the sequence is GG. Residue Lys127 participates in Mg(2+) binding. Substrate-binding positions include His223 and 251-253; that span reads NID. Positions 253 and 396 each coordinate UTP. Asp253 contributes to the Mg(2+) binding site. The active site involves Lys396. Thr426 bears the Phosphothreonine mark. Ser434 bears the Phosphoserine mark. The residue at position 438 (Lys438) is an N6-acetyllysine. Ser448 and Ser461 each carry phosphoserine. Positions 457 to 508 are oligomerization; that stretch reads HLTVSGDVTFGKNVSLKGTVIIIANHGDRIDIPPGAVLENKIVSGNLRILDH. The tract at residues 502 to 503 is critical for end-to-end subunit interaction; that stretch reads NL.

It belongs to the UDPGP type 1 family. Homooctamer.

The protein localises to the cytoplasm. The catalysed reaction is alpha-D-glucose 1-phosphate + UTP + H(+) = UDP-alpha-D-glucose + diphosphate. It participates in glycan biosynthesis; glycogen biosynthesis. In terms of biological role, UTP--glucose-1-phosphate uridylyltransferase catalyzing the conversion of glucose-1-phosphate into UDP-glucose, a crucial precursor for the production of glycogen. The protein is UTP--glucose-1-phosphate uridylyltransferase (UGP2) of Cricetulus griseus (Chinese hamster).